A 277-amino-acid polypeptide reads, in one-letter code: Ras suppressor protein 1 (277 aa).

The segment at 1 to 24 (MSKSLKKLVEESREKNQPEVDMSD) is disordered. The residue at position 2 (Ser-2) is an N-acetylserine. Residues 7–24 (KLVEESREKNQPEVDMSD) are compositionally biased toward basic and acidic residues. LRR repeat units follow at residues 41-63 (HITQLVLSHNKLTMVPPNIAELK), 64-85 (NLEVLNFFNNQIEELPTQISSL), 87-109 (KLKHLNLGMNRLNTLPRGFGSLP), 110-133 (ALEVLDLTYNNLSENSLPGNFFYL), 135-156 (TLRALYLSDNDFEILPPDIGKL), 158-179 (KLQILSLRDNDLISLPKEIGEL), and 181-202 (QLKELHIQGNRLTVLPPELGNL). The segment at 250 to 277 (MQANPEPPKKNNDKSKKISRKPLAAKNR) is disordered. Over residues 256–265 (PPKKNNDKSK) the composition is skewed to basic and acidic residues.

In terms of biological role, potentially plays a role in the Ras signal transduction pathway. Capable of suppressing v-Ras transformation in vitro. This chain is Ras suppressor protein 1 (RSU1), found in Homo sapiens (Human).